The primary structure comprises 255 residues: Zinc import ATP-binding protein ZnuC (255 aa).

Residues 5 to 220 (VALEHIAVAF…PDFIAMFGYR (216 aa)) form the ABC transporter domain.

The protein belongs to the ABC transporter superfamily. Zinc importer (TC 3.A.1.15.5) family. As to quaternary structure, the complex is composed of two ATP-binding proteins (ZnuC), two transmembrane proteins (ZnuB) and a solute-binding protein (ZnuA).

It is found in the cell inner membrane. It carries out the reaction Zn(2+)(out) + ATP(in) + H2O(in) = Zn(2+)(in) + ADP(in) + phosphate(in) + H(+)(in). In terms of biological role, part of the ABC transporter complex ZnuABC involved in zinc import. Responsible for energy coupling to the transport system. The protein is Zinc import ATP-binding protein ZnuC of Sodalis glossinidius (strain morsitans).